Reading from the N-terminus, the 443-residue chain is Probable nitrate/nitrite antiporter NarK1 (443 aa).

12 consecutive transmembrane segments (helical) span residues 23–43 (TLAF…GVPI), 56–76 (WISA…GILA), 79–99 (YGGR…AYLV), 108–128 (LLLY…GIAW), 142–164 (LGVF…ALIA), 182–202 (FIPF…WFGT), 230–250 (FSLY…WLPK), 255–275 (VFGL…FPAS), 298–318 (FGII…IVLY), 329–349 (FTMG…GMGI), 368–388 (AVGG…PPLF), and 401–421 (TFFV…LTVL).

The protein belongs to the major facilitator superfamily. Nitrate/nitrite porter (TC 2.A.1.8) family.

It is found in the cell membrane. The catalysed reaction is nitrate(in) + nitrite(out) = nitrate(out) + nitrite(in). Probable nitrate/nitrite antiporter that may be involved in nitrate import and nitrite export during anaerobic growth. In Thermus thermophilus, this protein is Probable nitrate/nitrite antiporter NarK1.